Consider the following 113-residue polypeptide: Cytochrome c (113 aa).

Ala-1 is subject to N-acetylalanine. Heme c contacts are provided by Cys-22, Cys-25, and His-26. Lys-80 carries the N6,N6,N6-trimethyllysine modification. A heme c-binding site is contributed by Met-88. N6,N6,N6-trimethyllysine is present on Lys-94.

Belongs to the cytochrome c family. Binds 1 heme c group covalently per subunit.

It localises to the mitochondrion intermembrane space. In terms of biological role, electron carrier protein. The oxidized form of the cytochrome c heme group can accept an electron from the heme group of the cytochrome c1 subunit of cytochrome reductase. Cytochrome c then transfers this electron to the cytochrome oxidase complex, the final protein carrier in the mitochondrial electron-transport chain. This Ginkgo biloba (Ginkgo) protein is Cytochrome c.